Consider the following 239-residue polypeptide: Purine nucleoside phosphorylase DeoD-type 1 (239 aa).

A purine D-ribonucleoside is bound at residue histidine 5. Phosphate is bound by residues glycine 21, arginine 25, arginine 44, and 88–91 (RVGS). A purine D-ribonucleoside-binding positions include 180–182 (EME) and 204–205 (SD). The Proton donor role is filled by aspartate 205.

The protein belongs to the PNP/UDP phosphorylase family. Homohexamer; trimer of homodimers.

It catalyses the reaction a purine D-ribonucleoside + phosphate = a purine nucleobase + alpha-D-ribose 1-phosphate. The enzyme catalyses a purine 2'-deoxy-D-ribonucleoside + phosphate = a purine nucleobase + 2-deoxy-alpha-D-ribose 1-phosphate. Its function is as follows. Catalyzes the reversible phosphorolytic breakdown of the N-glycosidic bond in the beta-(deoxy)ribonucleoside molecules, with the formation of the corresponding free purine bases and pentose-1-phosphate. This chain is Purine nucleoside phosphorylase DeoD-type 1, found in Vibrio parahaemolyticus serotype O3:K6 (strain RIMD 2210633).